Reading from the N-terminus, the 308-residue chain is UDP-3-O-acyl-N-acetylglucosamine deacetylase (308 aa).

Zn(2+) contacts are provided by His-78, His-235, and Asp-239. His-262 acts as the Proton donor in catalysis.

Belongs to the LpxC family. Zn(2+) is required as a cofactor.

The enzyme catalyses a UDP-3-O-[(3R)-3-hydroxyacyl]-N-acetyl-alpha-D-glucosamine + H2O = a UDP-3-O-[(3R)-3-hydroxyacyl]-alpha-D-glucosamine + acetate. It functions in the pathway glycolipid biosynthesis; lipid IV(A) biosynthesis; lipid IV(A) from (3R)-3-hydroxytetradecanoyl-[acyl-carrier-protein] and UDP-N-acetyl-alpha-D-glucosamine: step 2/6. Functionally, catalyzes the hydrolysis of UDP-3-O-myristoyl-N-acetylglucosamine to form UDP-3-O-myristoylglucosamine and acetate, the committed step in lipid A biosynthesis. The sequence is that of UDP-3-O-acyl-N-acetylglucosamine deacetylase from Anaeromyxobacter dehalogenans (strain 2CP-C).